Here is a 182-residue protein sequence, read N- to C-terminus: Plasmolipin (182 aa).

The segment at 1–20 is disordered; it reads MAEFPSKVSTRTSSPAQGVG. Residues 1–35 lie on the Cytoplasmic side of the membrane; sequence MAEFPSKVSTRTSSPAQGVGASVSAMRPDLGFVRS. A compositionally biased stretch (polar residues) spans 7–16; it reads KVSTRTSSPA. Serine 9 carries the phosphoserine modification. One can recognise an MARVEL domain in the interval 32–166; that stretch reads FVRSALGVLA…SAFFSFQAWR (135 aa). Residues 36–56 form a helical membrane-spanning segment; sequence ALGVLALLQLVLGLLVWALIA. Over 57–68 the chain is Extracellular; the sequence is DTPYHLYPAYGW. Residues 69–89 form a helical membrane-spanning segment; that stretch reads VMFVAVFLWLVTIVFFIIYLF. The Cytoplasmic segment spans residues 90 to 99; sequence QLHMKLYMVP. Residues 100 to 120 form a helical membrane-spanning segment; that stretch reads WPLVLLVFFVAATVLYITAFV. The Extracellular portion of the chain corresponds to 121 to 141; that stretch reads ACAAAVDLTSLRGSRPYNQRS. The chain crosses the membrane as a helical span at residues 142–162; the sequence is AASFFACLVMIAYGLSAFFSF. Over 163 to 182 the chain is Cytoplasmic; sequence QAWRGVGSNAATSQMAGGYS.

Belongs to the MAL family. Forms oligomers. Post-translationally, phosphorylated. Detected to the sciatic nerve, brain and kidney. In the sciatic nerve, found in Schwann cells; in the brain, in developing oligodendrocytes, especially of the corpus callosum, of cortical white matter, in the optic nerve and in the stratum radiatum and stratum oriens of the hippocampus. In kidney, segregated to the apical surface of renal tubular epithelia.

It localises to the cell membrane. The protein localises to the myelin membrane. It is found in the apical cell membrane. Functionally, main component of the myelin sheath that plays an important role in myelin membrane biogenesis and myelination. Plays an essential function in apical endocytosis. Regulates epithelial development through the regulation of apical endocytosis. Part of the intracellular machinery that mediates basolateral-to-apical transport of ICAM-1, an essential adhesion receptor in epithelial cells, from the subapical compartment in hepatic epithelial cells. The sequence is that of Plasmolipin (Pllp) from Rattus norvegicus (Rat).